The following is a 740-amino-acid chain: ATP-dependent RNA helicase DDX1 (740 aa).

The interaction with dsRNA stretch occupies residues 1–448 (MAAFSEMGVM…ETVHHVVVIV (448 aa)). Residues 2-428 (AAFSEMGVMP…SEKIMHFPTW (427 aa)) form the Helicase ATP-binding domain. 46–53 (AETGSGKT) contacts ATP. The B30.2/SPRY domain occupies 70–247 (DQMEGKKGKA…LKFNFGEEDF (178 aa)). The short motif at 370 to 373 (DEAD) is the DEAD box element. A Helicase C-terminal domain is found at 493 to 681 (KGEYTVRAIK…QVEPDIKVPV (189 aa)).

This sequence belongs to the DEAD box helicase family. DDX1 subfamily. As to expression, detected in embryonic retina, brain, heart and liver (at protein level). Detected in embryonic retina, brain, heart, kidney and liver.

Its subcellular location is the nucleus. It is found in the cytoplasm. The protein resides in the cytoplasmic granule. The protein localises to the cytosol. It localises to the mitochondrion. The enzyme catalyses ATP + H2O = ADP + phosphate + H(+). Functionally, acts as an ATP-dependent RNA helicase, able to unwind both RNA-RNA and RNA-DNA duplexes. Possesses 5' single-stranded RNA overhang nuclease activity. Acts as a positive regulator of transcription. May be involved in 3'-end cleavage and polyadenylation of pre-mRNAs. Binds DNA and RNA. Component of the tRNA-splicing ligase complex required to facilitate the enzymatic turnover of catalytic subunit RTCB. Binds (via helicase ATP-binding domain) on both short and long poly(I:C) dsRNA. The protein is ATP-dependent RNA helicase DDX1 (DDX1) of Gallus gallus (Chicken).